Consider the following 177-residue polypeptide: Large ribosomal subunit protein uL6 (177 aa).

This sequence belongs to the universal ribosomal protein uL6 family. Part of the 50S ribosomal subunit.

Its function is as follows. This protein binds to the 23S rRNA, and is important in its secondary structure. It is located near the subunit interface in the base of the L7/L12 stalk, and near the tRNA binding site of the peptidyltransferase center. This Actinobacillus pleuropneumoniae serotype 5b (strain L20) protein is Large ribosomal subunit protein uL6.